The primary structure comprises 540 residues: Hexose transporter HXT14 (540 aa).

The Cytoplasmic portion of the chain corresponds to 1–56 (MTAQIPYQHSSGYISHFHNNELDAGRGRDYNVTIKYLDDKEENIEGQAAKISHNAS). A helical membrane pass occupies residues 57 to 76 (LHIPVLLCLVISLGGFIFGW). Topologically, residues 77–119 (DIGTIGGMTNMVSFQEKFGTTNIIHDDETIFVSTKKLTDLQIG) are extracellular. The chain crosses the membrane as a helical span at residues 120–140 (LIISIFNISCGVGALTLSKIG). At 141 to 146 (DWIGRK) the chain is on the cytoplasmic side. A helical membrane pass occupies residues 147 to 167 (GGIWFALVVYCIGITIQILSY). Over 168–177 (GRWYFLTLGR) the chain is Extracellular. Residues 178–198 (AVTGIGVGVTTVLVPMFLSEN) form a helical membrane-spanning segment. The Cytoplasmic segment spans residues 199–204 (SPLKIR). Residues 205–225 (GSMVSTYQLIVTFGILMGNIL) traverse the membrane as a helical segment. Residues 226-243 (NFICERCYKDPTQNIAWQ) lie on the Extracellular side of the membrane. The helical transmembrane segment at 244–264 (LPLFLGYIWAIIIGMSLVYVP) threads the bilayer. Topologically, residues 265–357 (ESPQYLAKIK…IMAFQQLSGI (93 aa)) are cytoplasmic. A helical membrane pass occupies residues 358-374 (NYFFYYGTSVFKGVGIK). Residues 375-380 (DPYITS) lie on the Extracellular side of the membrane. The helical transmembrane segment at 381–398 (IILSSVNFLSTILGIYYV) threads the bilayer. Topologically, residues 399–405 (EKWGHKT) are cytoplasmic. Residues 406–426 (CLLYGSTNLLFYMMTYATVGT) traverse the membrane as a helical segment. The Extracellular segment spans residues 427–440 (FGRETDFSNIVLII). Residues 441–461 (VTCCFIFWFAITLGPVTFVLV) form a helical membrane-spanning segment. Topologically, residues 462 to 478 (SELFPLRTRAISMAICT) are cytoplasmic. Residues 479 to 499 (FINWMFNFLISLLTPMIVSKI) traverse the membrane as a helical segment. Asp500 is a topological domain (extracellular). A helical transmembrane segment spans residues 501-521 (FKLGYIFAACLLALIIFSWIL). At 522–540 (VPETRKKNEQEINKIFEPE) the chain is on the cytoplasmic side.

The protein belongs to the major facilitator superfamily. Sugar transporter (TC 2.A.1.1) family.

The protein localises to the membrane. Probable glucose transporter. The protein is Hexose transporter HXT14 (HXT14) of Saccharomyces cerevisiae (strain ATCC 204508 / S288c) (Baker's yeast).